We begin with the raw amino-acid sequence, 125 residues long: Small ribosomal subunit protein uS12 (125 aa).

Residues 1–23 (MATVNQLVRKGRTKRTAKSSVPA) are disordered. A 3-methylthioaspartic acid modification is found at Asp-89. The tract at residues 102–125 (ADTAGVDKRRQGRSKYGAKRPKKK) is disordered. A compositionally biased stretch (basic residues) spans 111–125 (RQGRSKYGAKRPKKK).

Belongs to the universal ribosomal protein uS12 family. Part of the 30S ribosomal subunit. Contacts proteins S8 and S17. May interact with IF1 in the 30S initiation complex.

In terms of biological role, with S4 and S5 plays an important role in translational accuracy. Interacts with and stabilizes bases of the 16S rRNA that are involved in tRNA selection in the A site and with the mRNA backbone. Located at the interface of the 30S and 50S subunits, it traverses the body of the 30S subunit contacting proteins on the other side and probably holding the rRNA structure together. The combined cluster of proteins S8, S12 and S17 appears to hold together the shoulder and platform of the 30S subunit. In Halorhodospira halophila (strain DSM 244 / SL1) (Ectothiorhodospira halophila (strain DSM 244 / SL1)), this protein is Small ribosomal subunit protein uS12.